The following is a 571-amino-acid chain: PR domain zinc finger protein 14 (571 aa).

Serine 79 is modified (phosphoserine). The tract at residues 129–191 (LGHQIIGGDN…PKPSNQEGKS (63 aa)) is disordered. Polar residues predominate over residues 165 to 176 (RTSQLLPCSPSK). The interaction with CBFA2T2 stretch occupies residues 194 to 384 (RFQFTEEDLH…DIPVSLQVTE (191 aa)). An SET domain is found at 251–367 (EGLCLMQTVF…QNQELLVWYG (117 aa)). Residues 400 to 424 (YRCERCGKVFTYKYYRDKHLKYTPC) form a C2H2-type 1; atypical zinc finger. 5 C2H2-type zinc fingers span residues 432–455 (FPCS…LHVH), 461–483 (HKCS…MRVH), 489–511 (YQCV…IRQH), 517–540 (FKCK…RRSH), and 546–568 (CSCS…MKFH).

Belongs to the class V-like SAM-binding methyltransferase superfamily. As to quaternary structure, interacts with CBFA2T2. In terms of tissue distribution, expressed in embryonic stem cells. Tends to be overexpressed in breast cancer (at protein level).

It localises to the nucleus. In terms of biological role, transcription factor that has both positive and negative roles on transcription. Required for the maintenance of embryonic stem cell identity and the reacquisition of pluripotency in somatic cells. May play an essential role in germ cell development at 2 levels: the reacquisition of potential pluripotency, including SOX2 up-regulation, and successful epigenetic reprogramming, characterized by EHMT1 repression. Its association with CBFA2T2 is required for the functions in pluripotency and germ cell formation. Directly up-regulates the expression of pluripotency gene POU5F1 through its proximal enhancer. Binds to the DNA consensus sequence 5'-GGTC[TC]CTAA-3'. The chain is PR domain zinc finger protein 14 (PRDM14) from Homo sapiens (Human).